We begin with the raw amino-acid sequence, 647 residues long: Denticleless protein homolog (647 aa).

7 WD repeats span residues 48 to 88 (AAAV…KQSS), 95 to 134 (AHDN…LLGT), 137 to 177 (GHQC…KDGF), 209 to 248 (DSQQ…TAYH), 264 to 303 (TRKL…TTPV), 308 to 349 (GHSN…QAPM), and 353 to 393 (GHSQ…EGEN). 2 consecutive short sequence motifs (DDB1-binding motif) follow at residues 167–170 (WDTR) and 238–241 (WDLR). Disordered regions lie at residues 410–487 (QSPN…SKSP) and 534–647 (KRSR…RTQD). 2 stretches are compositionally biased toward polar residues: residues 426-443 (PSKN…SPQP) and 471-486 (KMPS…SSKS). A compositionally biased stretch (basic and acidic residues) spans 543 to 558 (LKKEDSFGLESEKRLG). A compositionally biased stretch (low complexity) spans 586 to 600 (KGSAQPKSPSSGSSQ).

Belongs to the WD repeat cdt2 family. Component of the DCX(DTL) E3 ubiquitin ligase complex, at least composed of cul4 (cul4a or cul4b), ddb1, dtl/cdt2 and rbx1.

It localises to the nucleus. It is found in the cytoplasm. The protein resides in the cytoskeleton. Its subcellular location is the microtubule organizing center. The protein localises to the centrosome. It localises to the chromosome. Its pathway is protein modification; protein ubiquitination. Substrate-specific adapter of a DCX (DDB1-CUL4-X-box) E3 ubiquitin-protein ligase complex required for cell cycle control, DNA damage response and translesion DNA synthesis. The DCX(DTL) complex, also named CRL4(CDT2) complex, mediates the polyubiquitination and subsequent degradation of CDT1, CDKN1A/p21(CIP1), KMT5A and SDE2. CDT1 degradation in response to DNA damage is necessary to ensure proper cell cycle regulation of DNA replication. CDKN1A/p21(CIP1) degradation during S phase or following UV irradiation is essential to control replication licensing. KMT5A degradation is also important for a proper regulation of mechanisms such as TGF-beta signaling, cell cycle progression, DNA repair and cell migration. Most substrates require their interaction with PCNA for their polyubiquitination: substrates interact with PCNA via their PIP-box, and those containing the 'K+4' motif in the PIP box, recruit the DCX(DTL) complex, leading to their degradation. In undamaged proliferating cells, the DCX(DTL) complex also promotes the 'Lys-164' monoubiquitination of PCNA, thereby being involved in PCNA-dependent translesion DNA synthesis. May play a role in the regulation of the circadian clock. The sequence is that of Denticleless protein homolog (dtl) from Danio rerio (Zebrafish).